The primary structure comprises 144 residues: Large ribosomal subunit protein uL16 (144 aa).

It belongs to the universal ribosomal protein uL16 family. As to quaternary structure, part of the 50S ribosomal subunit.

Binds 23S rRNA and is also seen to make contacts with the A and possibly P site tRNAs. In Pediococcus pentosaceus (strain ATCC 25745 / CCUG 21536 / LMG 10740 / 183-1w), this protein is Large ribosomal subunit protein uL16.